Here is a 317-residue protein sequence, read N- to C-terminus: L-lactate dehydrogenase 1 (317 aa).

Residues valine 17, aspartate 38, lysine 43, tyrosine 69, and 83-84 each bind NAD(+); that span reads GA. Positions 86 and 92 each coordinate substrate. Residues serine 105, 122-124, and serine 147 each bind NAD(+); that span reads ATN. 124-127 provides a ligand contact to substrate; the sequence is NPVD. Residue 152–155 participates in substrate binding; that stretch reads DSAR. The active-site Proton acceptor is histidine 179. Tyrosine 223 carries the post-translational modification Phosphotyrosine. Threonine 232 serves as a coordination point for substrate.

It belongs to the LDH/MDH superfamily. LDH family. Homotetramer.

Its subcellular location is the cytoplasm. It carries out the reaction (S)-lactate + NAD(+) = pyruvate + NADH + H(+). It functions in the pathway fermentation; pyruvate fermentation to lactate; (S)-lactate from pyruvate: step 1/1. Its function is as follows. Catalyzes the conversion of lactate to pyruvate (Potential). Appears to be the primary factor that allows S.aureus growth during nitrosative stress in both aerobically and anaerobically cultured cells. The protein is L-lactate dehydrogenase 1 of Staphylococcus aureus (strain MRSA252).